Here is a 321-residue protein sequence, read N- to C-terminus: Acetyl-coenzyme A carboxylase carboxyl transferase subunit alpha (321 aa).

One can recognise a CoA carboxyltransferase C-terminal domain in the interval 37 to 298; it reads DLDDEIKRLQ…KQRILSDLED (262 aa).

The protein belongs to the AccA family. In terms of assembly, acetyl-CoA carboxylase is a heterohexamer composed of biotin carboxyl carrier protein (AccB), biotin carboxylase (AccC) and two subunits each of ACCase subunit alpha (AccA) and ACCase subunit beta (AccD).

It localises to the cytoplasm. The enzyme catalyses N(6)-carboxybiotinyl-L-lysyl-[protein] + acetyl-CoA = N(6)-biotinyl-L-lysyl-[protein] + malonyl-CoA. Its pathway is lipid metabolism; malonyl-CoA biosynthesis; malonyl-CoA from acetyl-CoA: step 1/1. Functionally, component of the acetyl coenzyme A carboxylase (ACC) complex. First, biotin carboxylase catalyzes the carboxylation of biotin on its carrier protein (BCCP) and then the CO(2) group is transferred by the carboxyltransferase to acetyl-CoA to form malonyl-CoA. The chain is Acetyl-coenzyme A carboxylase carboxyl transferase subunit alpha from Mannheimia succiniciproducens (strain KCTC 0769BP / MBEL55E).